Consider the following 333-residue polypeptide: Taste receptor type 2 member 38 (333 aa).

At 1-17 (MLTLTRICAVSYEVRST) the chain is on the extracellular side. The helical transmembrane segment at 18 to 38 (FLFISVLEFAVGFLTNAFIFL) threads the bilayer. Residues 39–55 (VNFWDVVKRQPLSNSDC) are Cytoplasmic-facing. The helical transmembrane segment at 56 to 76 (VLLCLSISRLFLHGLLFLSAI) threads the bilayer. Residues 77 to 94 (QLTHFQKLSEPLNHSYQA) are Extracellular-facing. Residues 95–115 (IIMLWIIANQANLWLAACLSL) traverse the membrane as a helical segment. Over 116–142 (LYCSKLIRFSHTFLICLASWVSRKISQ) the chain is Cytoplasmic. A helical transmembrane segment spans residues 143 to 163 (MLLGIILCSCICTVLCVWCFF). Topologically, residues 164 to 190 (SRPHFTVTTFLFMNNNTRLNWQIKDLN) are extracellular. A glycan (N-linked (GlcNAc...) asparagine) is linked at Asn-178. Residues 191–211 (LFYSFLFCYLWSVPPFLLFLV) form a helical membrane-spanning segment. Over 212–251 (SSGMLTVSLGRHMRTMKVYTRDSRDPSLEAHIKALKSLVS) the chain is Cytoplasmic. The helical transmembrane segment at 252–272 (FFCFFVISSCAAFISVPLLIL) threads the bilayer. Residues 273 to 276 (WRNK) lie on the Extracellular side of the membrane. A helical transmembrane segment spans residues 277–297 (IGVMVCVGIMAACPSGHAAVL). The Cytoplasmic portion of the chain corresponds to 298-333 (ISGNATLRRAVTTILLWAQSSMKVRADHKADSRTLC).

This sequence belongs to the G-protein coupled receptor T2R family.

The protein localises to the membrane. Functionally, receptor that may play a role in the perception of bitterness and is gustducin-linked. May play a role in sensing the chemical composition of the gastrointestinal content. The activity of this receptor may stimulate alpha gustducin, mediate PLC-beta-2 activation and lead to the gating of TRPM5. The protein is Taste receptor type 2 member 38 (TAS2R38) of Pongo pygmaeus (Bornean orangutan).